We begin with the raw amino-acid sequence, 73 residues long: Protein DSS1 HOMOLOG ON CHROMOSOME V (73 aa).

This sequence belongs to the DSS1/SEM1 family. Part of the 26S proteasome. Interacts with BRCA2B. Interacts with EER5. Interacts with UCH1 and UCH2.

In terms of biological role, subunit of the 26S proteasome which plays a role in ubiquitin-dependent proteolysis. Also associates with the TREX-2 complex that is required for transcription-coupled mRNA export. This is Protein DSS1 HOMOLOG ON CHROMOSOME V from Arabidopsis thaliana (Mouse-ear cress).